We begin with the raw amino-acid sequence, 650 residues long: ATP-dependent zinc metalloprotease FtsH (650 aa).

Over 1 to 10 the chain is Cytoplasmic; the sequence is MKTKKSKSTL. Residues 11–31 form a helical membrane-spanning segment; it reads WFWLIILLAIIVTIIIIAVTV. At 32-123 the chain is on the extracellular side; sequence KGTTQVISDA…LVYQGSVGMA (92 aa). Residues 124 to 144 traverse the membrane as a helical segment; the sequence is LLVSLAPLLIYVLLFGGIIWF. Residues 145–650 lie on the Cytoplasmic side of the membrane; the sequence is MMKSSSGAGA…DIKVEDLDID (506 aa). 217–224 contributes to the ATP binding site; sequence GPPGTGKT. His-437 is a binding site for Zn(2+). Glu-438 is an active-site residue. Residues His-441 and Asp-515 each coordinate Zn(2+).

This sequence in the central section; belongs to the AAA ATPase family. The protein in the C-terminal section; belongs to the peptidase M41 family. As to quaternary structure, homohexamer. Zn(2+) is required as a cofactor.

It localises to the cell membrane. Acts as a processive, ATP-dependent zinc metallopeptidase for both cytoplasmic and membrane proteins. Plays a role in the quality control of integral membrane proteins. This Mesoplasma florum (strain ATCC 33453 / NBRC 100688 / NCTC 11704 / L1) (Acholeplasma florum) protein is ATP-dependent zinc metalloprotease FtsH.